The primary structure comprises 308 residues: UDP-N-acetylenolpyruvoylglucosamine reductase (308 aa).

The region spanning 32 to 196 (VGGPAARLYK…ISAKLQLSPG (165 aa)) is the FAD-binding PCMH-type domain. The active site involves arginine 176. Serine 225 functions as the Proton donor in the catalytic mechanism. Glutamate 296 is a catalytic residue.

Belongs to the MurB family. FAD is required as a cofactor.

It localises to the cytoplasm. The catalysed reaction is UDP-N-acetyl-alpha-D-muramate + NADP(+) = UDP-N-acetyl-3-O-(1-carboxyvinyl)-alpha-D-glucosamine + NADPH + H(+). It participates in cell wall biogenesis; peptidoglycan biosynthesis. Functionally, cell wall formation. The chain is UDP-N-acetylenolpyruvoylglucosamine reductase from Legionella pneumophila (strain Corby).